The following is a 428-amino-acid chain: Trigger factor (428 aa).

The PPIase FKBP-type domain occupies 163 to 248 (GDTAIIDFEG…INDVKVKELS (86 aa)).

Belongs to the FKBP-type PPIase family. Tig subfamily.

The protein localises to the cytoplasm. The catalysed reaction is [protein]-peptidylproline (omega=180) = [protein]-peptidylproline (omega=0). Functionally, involved in protein export. Acts as a chaperone by maintaining the newly synthesized protein in an open conformation. Functions as a peptidyl-prolyl cis-trans isomerase. The sequence is that of Trigger factor from Clostridioides difficile (strain 630) (Peptoclostridium difficile).